Here is a 688-residue protein sequence, read N- to C-terminus: Polyribonucleotide nucleotidyltransferase (688 aa).

Residues D484 and D490 each contribute to the Mg(2+) site. Residues 550–609 (PTTEIFNVAPDKIVEIIGQGGRVIREIVEKFEVKIDLNKPSGEVKIMGNKERVLKTKEFI) form the KH domain. One can recognise an S1 motif domain in the interval 626–688 (DEVLEAQVKR…NKGKIALDLA (63 aa)).

This sequence belongs to the polyribonucleotide nucleotidyltransferase family. Requires Mg(2+) as cofactor.

It localises to the cytoplasm. It catalyses the reaction RNA(n+1) + phosphate = RNA(n) + a ribonucleoside 5'-diphosphate. Functionally, involved in mRNA degradation. Catalyzes the phosphorolysis of single-stranded polyribonucleotides processively in the 3'- to 5'-direction. The protein is Polyribonucleotide nucleotidyltransferase of Helicobacter pylori (strain Shi470).